Reading from the N-terminus, the 252-residue chain is Small ribosomal subunit protein uS2A (252 aa).

Residue serine 2 is modified to N-acetylserine. Residues 209-252 (EVEQQAAEETTSTGADAEESKEEVAEGQNEASEWAEENTEAVSW) form a disordered region. Positions 241 to 252 (EWAEENTEAVSW) are enriched in acidic residues.

It belongs to the universal ribosomal protein uS2 family. Component of the small ribosomal subunit. Mature ribosomes consist of a small (40S) and a large (60S) subunit. The 40S subunit contains about 33 different proteins and 1 molecule of RNA (18S). The 60S subunit contains about 49 different proteins and 3 molecules of RNA (25S, 5.8S and 5S). Interacts with RPS21.

It is found in the cytoplasm. Required for the assembly and/or stability of the 40S ribosomal subunit. Required for the processing of the 20S rRNA-precursor to mature 18S rRNA in a late step of the maturation of 40S ribosomal subunits. In Vanderwaltozyma polyspora (strain ATCC 22028 / DSM 70294 / BCRC 21397 / CBS 2163 / NBRC 10782 / NRRL Y-8283 / UCD 57-17) (Kluyveromyces polysporus), this protein is Small ribosomal subunit protein uS2A.